The following is a 384-amino-acid chain: Guanine nucleotide-binding protein alpha-1 subunit (384 aa).

Gly2 is lipidated: N-myristoyl glycine. The S-palmitoyl cysteine moiety is linked to residue Cys5. The 347-residue stretch at 38–384 (HIQKLLLLGA…RRNLFEAGLL (347 aa)) folds into the G-alpha domain. The G1 motif stretch occupies residues 41–54 (KLLLLGAGESGKST). GTP is bound by residues Glu49, Ser50, Gly51, Lys52, Ser53, Thr54, Leu188, Tyr189, Thr194, Gly222, Asn288, Lys289, Asp291, and Ala356. Ser53 contacts Mg(2+). The interval 186–194 (DVLYARVRT) is G2 motif. Position 194 (Thr194) interacts with Mg(2+). Positions 215–224 (YRLFDVGGQR) are G3 motif. The segment at 284–291 (MLFLNKFD) is G4 motif. The interval 354-359 (TTALDQ) is G5 motif.

The protein belongs to the G-alpha family. G proteins are composed of 3 units; alpha, beta and gamma. The alpha chain contains the guanine nucleotide binding site. Mg(2+) is required as a cofactor.

Guanine nucleotide-binding proteins (G proteins) are involved as modulators or transducers in various transmembrane signaling systems. This Lupinus luteus (European yellow lupine) protein is Guanine nucleotide-binding protein alpha-1 subunit (GPA1).